Reading from the N-terminus, the 788-residue chain is Protein HID1 (788 aa).

A lipid anchor (N-myristoyl glycine) is attached at Gly2. The segment covering 297–313 (ATSTSPTVDGTTTGTAM) has biased composition (low complexity). Disordered stretches follow at residues 297–316 (ATST…MDDA) and 571–680 (PPSI…QWSP). Polar residues-rich tracts occupy residues 590 to 600 (RTGSQEGTSME) and 643 to 680 (PESQ…QWSP). 2 positions are modified to phosphoserine: Ser653 and Ser670.

This sequence belongs to the hid-1 family.

The protein resides in the cytoplasm. Its subcellular location is the golgi apparatus membrane. This chain is Protein HID1 (Hid1), found in Mus musculus (Mouse).